The primary structure comprises 179 residues: uncharacterized protein (179 aa).

This is an uncharacterized protein from Galliformes (FAdV-1).